A 581-amino-acid chain; its full sequence is Moesin/ezrin/radixin homolog 1 (581 aa).

Residues methionine 8–arginine 298 form the FERM domain. The segment at glutamine 452–asparagine 519 is disordered. Low complexity predominate over residues alanine 459–threonine 469. Residues glutamate 477–isoleucine 486 are compositionally biased toward acidic residues. Positions phenylalanine 495–asparagine 519 are enriched in basic and acidic residues. Threonine 562 is modified (phosphothreonine).

Interacts with cytoskeletal actin.

The protein localises to the cell junction. It is found in the adherens junction. Its subcellular location is the cell projection. The protein resides in the microvillus. It localises to the rhabdomere. The protein localises to the cell membrane. It is found in the cytoplasm. Its subcellular location is the cytoskeleton. Involved in connections of major cytoskeletal structures to the plasma membrane. This chain is Moesin/ezrin/radixin homolog 1, found in Anopheles gambiae (African malaria mosquito).